A 211-amino-acid chain; its full sequence is Uracil phosphoribosyltransferase (211 aa).

5-phospho-alpha-D-ribose 1-diphosphate-binding positions include R78, R103, and D130 to T138. Residues I195 and G200–A202 each bind uracil. D201 provides a ligand contact to 5-phospho-alpha-D-ribose 1-diphosphate.

Belongs to the UPRTase family. The cofactor is Mg(2+).

It catalyses the reaction UMP + diphosphate = 5-phospho-alpha-D-ribose 1-diphosphate + uracil. It functions in the pathway pyrimidine metabolism; UMP biosynthesis via salvage pathway; UMP from uracil: step 1/1. With respect to regulation, allosterically activated by GTP. Catalyzes the conversion of uracil and 5-phospho-alpha-D-ribose 1-diphosphate (PRPP) to UMP and diphosphate. This is Uracil phosphoribosyltransferase from Pseudarthrobacter chlorophenolicus (strain ATCC 700700 / DSM 12829 / CIP 107037 / JCM 12360 / KCTC 9906 / NCIMB 13794 / A6) (Arthrobacter chlorophenolicus).